Consider the following 373-residue polypeptide: 3-isopropylmalate dehydrogenase (373 aa).

82-93 (GPKWGTGALRPE) serves as a coordination point for NAD(+). Arg-100, Arg-110, Arg-139, and Asp-231 together coordinate substrate. The Mg(2+) site is built by Asp-231, Asp-256, and Asp-260. An NAD(+)-binding site is contributed by 295-306 (GSAPDLPANKVN).

The protein belongs to the isocitrate and isopropylmalate dehydrogenases family. Homodimer. Mg(2+) serves as cofactor. Requires Mn(2+) as cofactor.

The protein resides in the cytoplasm. It carries out the reaction (2R,3S)-3-isopropylmalate + NAD(+) = 4-methyl-2-oxopentanoate + CO2 + NADH. It participates in amino-acid biosynthesis; L-leucine biosynthesis; L-leucine from 3-methyl-2-oxobutanoate: step 3/4. Its function is as follows. Catalyzes the oxidation of 3-carboxy-2-hydroxy-4-methylpentanoate (3-isopropylmalate) to 3-carboxy-4-methyl-2-oxopentanoate. The product decarboxylates to 4-methyl-2 oxopentanoate. The sequence is that of 3-isopropylmalate dehydrogenase (LEU2) from Candida maltosa (Yeast).